Here is a 153-residue protein sequence, read N- to C-terminus: Small ribosomal subunit protein uS13 (153 aa).

The interval 134 to 153 (GQRTKSNGRRGRSMGVSRKK) is disordered.

Belongs to the universal ribosomal protein uS13 family.

It is found in the cytoplasm. Located at the top of the head of the 40S subunit, it contacts several helices of the 18S rRNA. In Encephalitozoon cuniculi (strain GB-M1) (Microsporidian parasite), this protein is Small ribosomal subunit protein uS13 (RPS18).